Reading from the N-terminus, the 352-residue chain is Rhodopsin (352 aa).

The Extracellular portion of the chain corresponds to 1–36; it reads MNGTEGPFFYIPMVNTTGIVRSPYEYPQYYLVNPAA. Residues Asn-2 and Asn-15 are each glycosylated (N-linked (GlcNAc...) asparagine). The chain crosses the membrane as a helical span at residues 37-61; that stretch reads YAALGAYMFFLILTGFPINFLTLYV. Residues 62-73 are Cytoplasmic-facing; that stretch reads TLEHKKLRTALN. A helical membrane pass occupies residues 74–96; that stretch reads LILLNLAVADLFMVFGGFTTTMY. The Extracellular segment spans residues 97–110; it reads TSMHGYFVLGRLGC. A disulfide bond links Cys-110 and Cys-187. Residues 111–133 traverse the membrane as a helical segment; the sequence is NVEGFFATLGGEIALWSLVVLAV. A 'Ionic lock' involved in activated form stabilization motif is present at residues 134 to 136; sequence ERW. Topologically, residues 134 to 152 are cytoplasmic; the sequence is ERWVVVCKPISNFRFTENH. A helical transmembrane segment spans residues 153-173; it reads AIMGVAFSWIMAATCAVPPLV. At 174 to 202 the chain is on the extracellular side; that stretch reads GWSRYIPEGMQCSCGVDYYTRAEGFNNES. A helical transmembrane segment spans residues 203 to 224; it reads FVIYMFIVHFLAPLIVIFFCYG. Residues 225–252 lie on the Cytoplasmic side of the membrane; sequence RLLCAVKEAAAAQQESETTQRAEREVTR. The chain crosses the membrane as a helical span at residues 253–274; it reads MVIIMVIGFLTSWLPYASVAWY. The Extracellular segment spans residues 275 to 286; sequence IFTHQGTEFGPL. Residues 287–308 traverse the membrane as a helical segment; sequence FMTIPAFFAKSSALYNPMIYIC. Lys-296 is modified (N6-(retinylidene)lysine). Topologically, residues 309 to 352 are cytoplasmic; sequence MNKQFRHCMITTLCCGKNPFEEEEGASTTKTEASSVSSSSVSPA. 2 S-palmitoyl cysteine lipidation sites follow: Cys-322 and Cys-323. Residues 331–352 are disordered; sequence EEGASTTKTEASSVSSSSVSPA. Over residues 342–352 the composition is skewed to low complexity; it reads SSVSSSSVSPA.

Belongs to the G-protein coupled receptor 1 family. Opsin subfamily. In terms of processing, phosphorylated on some or all of the serine and threonine residues present in the C-terminal region. Contains one covalently linked retinal chromophore.

It is found in the membrane. It localises to the cell projection. The protein localises to the cilium. Its subcellular location is the photoreceptor outer segment. Photoreceptor required for image-forming vision at low light intensity. While most salt water fish species use retinal as chromophore, most freshwater fish use 3-dehydroretinal, or a mixture of retinal and 3-dehydroretinal. Light-induced isomerization of 11-cis to all-trans retinal triggers a conformational change that activates signaling via G-proteins. Subsequent receptor phosphorylation mediates displacement of the bound G-protein alpha subunit by arrestin and terminates signaling. This Pomatoschistus minutus (Sand goby) protein is Rhodopsin (rho).